A 263-amino-acid polypeptide reads, in one-letter code: Splicing regulator sde2 (263 aa).

Positions 1 to 84 (MECKTVFLNG…LTLCTRVLGG (84 aa)) are cleaved as a propeptide — UBL. 3 disordered regions span residues 95-118 (AGGRMSKKRNEQENQDSCRDLDGN), 137-158 (PAETRAKKEAKKQKLNKVLAAD), and 194-263 (STSA…LYGL). A compositionally biased stretch (basic and acidic residues) spans 102-117 (KRNEQENQDSCRDLDG). Low complexity-rich tracts occupy residues 194–209 (STSASSFSSGSNGATT) and 219–230 (NNNSSINSWSRR).

The protein belongs to the SDE2 family. Interacts with cay1/cactin. Interacts with prp19. Interacts with cwf12. Interacts with cdc5. In terms of processing, the N-terminal UBL (ubiquitin-like) propeptide is cleaved at Gly-84 by the deubiquitinating enzymes ubp5 and ubp15; the resulting mature sde2 associates with spliceosomes. Polyubiquitinated; ubiquitination is partially dependent on ubr11.

The protein localises to the cytoplasm. Its subcellular location is the nucleus. Plays a role in pre-mRNA splicing by facilitating excision of introns featuring relatively long (&gt;21 nucleotides) spacing between the branchpoint and 3'-splice site (ss). Recruits cactin to the spliceosome which may enable folding of RNA between the branchpoint and 3'-ss, to guide the splice site towards the spliceosome's catalytic center. Required for proper chromatin organization by assisting splicing of components involved in genomic stability and telomere organization. This chain is Splicing regulator sde2, found in Schizosaccharomyces pombe (strain 972 / ATCC 24843) (Fission yeast).